Consider the following 355-residue polypeptide: UDP-N-acetylglucosamine--N-acetylmuramyl-(pentapeptide) pyrophosphoryl-undecaprenol N-acetylglucosamine transferase (355 aa).

Residues 15 to 17 (TGG), Asn-127, Arg-163, Ser-191, Ile-244, 263 to 268 (ALTVSE), and Gln-288 each bind UDP-N-acetyl-alpha-D-glucosamine.

Belongs to the glycosyltransferase 28 family. MurG subfamily.

It is found in the cell inner membrane. It carries out the reaction di-trans,octa-cis-undecaprenyl diphospho-N-acetyl-alpha-D-muramoyl-L-alanyl-D-glutamyl-meso-2,6-diaminopimeloyl-D-alanyl-D-alanine + UDP-N-acetyl-alpha-D-glucosamine = di-trans,octa-cis-undecaprenyl diphospho-[N-acetyl-alpha-D-glucosaminyl-(1-&gt;4)]-N-acetyl-alpha-D-muramoyl-L-alanyl-D-glutamyl-meso-2,6-diaminopimeloyl-D-alanyl-D-alanine + UDP + H(+). Its pathway is cell wall biogenesis; peptidoglycan biosynthesis. In terms of biological role, cell wall formation. Catalyzes the transfer of a GlcNAc subunit on undecaprenyl-pyrophosphoryl-MurNAc-pentapeptide (lipid intermediate I) to form undecaprenyl-pyrophosphoryl-MurNAc-(pentapeptide)GlcNAc (lipid intermediate II). In Salmonella typhi, this protein is UDP-N-acetylglucosamine--N-acetylmuramyl-(pentapeptide) pyrophosphoryl-undecaprenol N-acetylglucosamine transferase.